Reading from the N-terminus, the 406-residue chain is CRISP/Allergen/PR-1 (406 aa).

Residues 1 to 18 (MHFQVILMMMWLWLEAEG) form the signal peptide. N39 carries an N-linked (GlcNAc...) asparagine glycan. The region spanning 58-205 (LREHNKLRSR…TFKDLYTCNY (148 aa)) is the SCP domain.

It belongs to the CRISP family. In terms of processing, contains 9 disulfide bonds. As to expression, expressed by the venom gland.

Its subcellular location is the secreted. The protein is CRISP/Allergen/PR-1 of Trittame loki (Brush-footed trapdoor spider).